The chain runs to 418 residues: NADH-quinone oxidoreductase subunit D (418 aa).

It belongs to the complex I 49 kDa subunit family. In terms of assembly, NDH-1 is composed of 14 different subunits. Subunits NuoB, C, D, E, F, and G constitute the peripheral sector of the complex.

Its subcellular location is the cell inner membrane. It catalyses the reaction a quinone + NADH + 5 H(+)(in) = a quinol + NAD(+) + 4 H(+)(out). Its function is as follows. NDH-1 shuttles electrons from NADH, via FMN and iron-sulfur (Fe-S) centers, to quinones in the respiratory chain. The immediate electron acceptor for the enzyme in this species is believed to be ubiquinone. Couples the redox reaction to proton translocation (for every two electrons transferred, four hydrogen ions are translocated across the cytoplasmic membrane), and thus conserves the redox energy in a proton gradient. The polypeptide is NADH-quinone oxidoreductase subunit D (Neisseria meningitidis serogroup C (strain 053442)).